Consider the following 501-residue polypeptide: Glucose-6-phosphate exchanger SLC37A2 (501 aa).

The helical transmembrane segment at 19–39 threads the bilayer; that stretch reads SWFRGFILLLTFLIYACYHMS. Asparagine 53, asparagine 62, and asparagine 68 each carry an N-linked (GlcNAc...) asparagine glycan. The next 5 helical transmembrane spans lie at 88-108, 118-140, 142-164, 179-199, and 210-230; these read GAVDNAFLVAYAIGMFISGIF, LSAGMVLSGLFTSLFGLGYFWNI, MLWYFVLIQICNGLVQTTGWPSV, FIMGIWNSHTSVGNILGSLIA, and SFIVPGIITAIMGVITFLFLI. The span at 240–252 shows a compositional bias: basic and acidic residues; sequence PPRHHDDPEKEQD. The tract at residues 240 to 266 is disordered; sequence PPRHHDDPEKEQDNPEDPVNSPYSSRE. Helical transmembrane passes span 303–323, 334–354, 362–382, 391–411, 434–454, and 462–482; these read CLLFAKLVSYTFLYWLPLYIF, GDLSTLFDVGGIIGGIMAGLI, ATTCCIMLILAAPMMFLYNYI, IVMLIICGVLVNGPYALITTA, AIIDGTGSIGAALGPLLAGLI, and VFYMLISADVLACLLLCRLVY.

Belongs to the major facilitator superfamily. Organophosphate:Pi antiporter (OPA) (TC 2.A.1.4) family. As to expression, highly expressed in bone marrow derived macrophages, and weakly in spleen.

The protein resides in the endoplasmic reticulum membrane. The enzyme catalyses D-glucose 6-phosphate(in) + phosphate(out) = D-glucose 6-phosphate(out) + phosphate(in). With respect to regulation, inhibited by vanadate but not by chlorogenic acid. Its function is as follows. Inorganic phosphate and glucose-6-phosphate antiporter. May transport cytoplasmic glucose-6-phosphate into the lumen of the endoplasmic reticulum and translocate inorganic phosphate into the opposite direction. Independent of a lumenal glucose-6-phosphatase. May not play a role in homeostatic regulation of blood glucose levels. The protein is Glucose-6-phosphate exchanger SLC37A2 of Mus musculus (Mouse).